The chain runs to 192 residues: NADH-quinone oxidoreductase subunit B (192 aa).

[4Fe-4S] cluster-binding residues include cysteine 71, cysteine 72, cysteine 136, and cysteine 166.

Belongs to the complex I 20 kDa subunit family. As to quaternary structure, NDH-1 is composed of 14 different subunits. Subunits NuoB, C, D, E, F, and G constitute the peripheral sector of the complex. Requires [4Fe-4S] cluster as cofactor.

Its subcellular location is the cell inner membrane. It catalyses the reaction a quinone + NADH + 5 H(+)(in) = a quinol + NAD(+) + 4 H(+)(out). Its function is as follows. NDH-1 shuttles electrons from NADH, via FMN and iron-sulfur (Fe-S) centers, to quinones in the respiratory chain. Couples the redox reaction to proton translocation (for every two electrons transferred, four hydrogen ions are translocated across the cytoplasmic membrane), and thus conserves the redox energy in a proton gradient. The chain is NADH-quinone oxidoreductase subunit B from Azorhizobium caulinodans (strain ATCC 43989 / DSM 5975 / JCM 20966 / LMG 6465 / NBRC 14845 / NCIMB 13405 / ORS 571).